A 140-amino-acid chain; its full sequence is Small ribosomal subunit protein uS12 (140 aa).

D103 is modified (3-methylthioaspartic acid). The tract at residues 120-140 is disordered; it reads GVQKRMQARSKYGAKRPKKGK. The segment covering 125-140 has biased composition (basic residues); sequence MQARSKYGAKRPKKGK.

Belongs to the universal ribosomal protein uS12 family. Part of the 30S ribosomal subunit. Contacts proteins S8 and S17. May interact with IF1 in the 30S initiation complex.

Functionally, with S4 and S5 plays an important role in translational accuracy. In terms of biological role, interacts with and stabilizes bases of the 16S rRNA that are involved in tRNA selection in the A site and with the mRNA backbone. Located at the interface of the 30S and 50S subunits, it traverses the body of the 30S subunit contacting proteins on the other side and probably holding the rRNA structure together. The combined cluster of proteins S8, S12 and S17 appears to hold together the shoulder and platform of the 30S subunit. This is Small ribosomal subunit protein uS12 from Desulfitobacterium hafniense (strain Y51).